A 607-amino-acid polypeptide reads, in one-letter code: Glycosyltransferase 25 family member (607 aa).

The N-terminal stretch at 1–22 is a signal peptide; sequence MKPVSCVGLLVLLVGVLVTVKG. N-linked (GlcNAc...) asparagine glycosylation is found at Asn-226, Asn-254, Asn-514, and Asn-565. The disordered stretch occupies residues 566–607; that stretch reads DTSDSSAEKKGDKEQLSSKTLMDSTISRDEHELSVANRKSEL. Basic and acidic residues-rich tracts occupy residues 571-581 and 591-607; these read SAEKKGDKEQL and ISRD…KSEL. The Prevents secretion from ER motif lies at 604–607; it reads KSEL.

This sequence belongs to the glycosyltransferase 25 family.

Its subcellular location is the endoplasmic reticulum lumen. This chain is Glycosyltransferase 25 family member, found in Aedes aegypti (Yellowfever mosquito).